We begin with the raw amino-acid sequence, 184 residues long: Ribosome-recycling factor (184 aa).

This sequence belongs to the RRF family.

It is found in the cytoplasm. Its function is as follows. Responsible for the release of ribosomes from messenger RNA at the termination of protein biosynthesis. May increase the efficiency of translation by recycling ribosomes from one round of translation to another. This chain is Ribosome-recycling factor, found in Fervidobacterium nodosum (strain ATCC 35602 / DSM 5306 / Rt17-B1).